The following is a 423-amino-acid chain: Amino acid transporter AVT1J (423 aa).

11 helical membrane-spanning segments follow: residues 39-59 (CFHG…YALA), 63-83 (WLSL…AILI), 110-130 (VIVS…FLIL), 151-171 (FQGK…SVWL), 186-206 (FASG…GVGF), 219-239 (VATS…FPTL), 252-272 (VMII…VLGY), 297-317 (AIWT…TPII), 333-355 (ASGF…LLPF), 359-381 (LMSL…LCYL), and 390-410 (LGFE…VVIT).

This sequence belongs to the amino acid/polyamine transporter 2 family. Amino acid/auxin permease (AAAP) (TC 2.A.18.5) subfamily.

Its subcellular location is the membrane. The chain is Amino acid transporter AVT1J from Arabidopsis thaliana (Mouse-ear cress).